Reading from the N-terminus, the 281-residue chain is Trypsin zeta (281 aa).

Residues 1–23 (MSSSSWLGCLLAVLLSALALSQG) form the signal peptide. Positions 24-39 (LPLLEDLDENSFPDGR) are cleaved as a propeptide — activation peptide. Residues 40–279 (IVGGYVTDIA…LRPWIDAVRA (240 aa)) enclose the Peptidase S1 domain. C73 and C89 are joined by a disulfide. Catalysis depends on charge relay system residues H88 and D135. Disulfide bonds link C199/C219 and C231/C255. Catalysis depends on S235, which acts as the Charge relay system.

The protein belongs to the peptidase S1 family.

It is found in the secreted. Its subcellular location is the extracellular space. It catalyses the reaction Preferential cleavage: Arg-|-Xaa, Lys-|-Xaa.. The sequence is that of Trypsin zeta (zetaTry) from Drosophila erecta (Fruit fly).